The following is a 439-amino-acid chain: ATP-dependent protease ATPase subunit HslU (439 aa).

ATP-binding positions include I17, 59–64 (GVGKTE), D251, E317, and R389.

Belongs to the ClpX chaperone family. HslU subfamily. As to quaternary structure, a double ring-shaped homohexamer of HslV is capped on each side by a ring-shaped HslU homohexamer. The assembly of the HslU/HslV complex is dependent on binding of ATP.

The protein localises to the cytoplasm. Functionally, ATPase subunit of a proteasome-like degradation complex; this subunit has chaperone activity. The binding of ATP and its subsequent hydrolysis by HslU are essential for unfolding of protein substrates subsequently hydrolyzed by HslV. HslU recognizes the N-terminal part of its protein substrates and unfolds these before they are guided to HslV for hydrolysis. This Campylobacter jejuni (strain RM1221) protein is ATP-dependent protease ATPase subunit HslU.